The primary structure comprises 212 residues: ATP phosphoribosyltransferase 2 (212 aa).

The protein belongs to the ATP phosphoribosyltransferase family. Short subfamily. In terms of assembly, heteromultimer composed of HisG and HisZ subunits.

Its subcellular location is the cytoplasm. It carries out the reaction 1-(5-phospho-beta-D-ribosyl)-ATP + diphosphate = 5-phospho-alpha-D-ribose 1-diphosphate + ATP. It participates in amino-acid biosynthesis; L-histidine biosynthesis; L-histidine from 5-phospho-alpha-D-ribose 1-diphosphate: step 1/9. Its function is as follows. Catalyzes the condensation of ATP and 5-phosphoribose 1-diphosphate to form N'-(5'-phosphoribosyl)-ATP (PR-ATP). Has a crucial role in the pathway because the rate of histidine biosynthesis seems to be controlled primarily by regulation of HisG enzymatic activity. The chain is ATP phosphoribosyltransferase 2 (hisG2) from Geobacter sulfurreducens (strain ATCC 51573 / DSM 12127 / PCA).